A 360-amino-acid polypeptide reads, in one-letter code: Deoxyhypusine hydroxylase (360 aa).

3 HEAT-like PBS-type repeats span residues 56 to 82 (LKHE…ILQD), 89 to 115 (VRHE…YRSD), and 213 to 245 (ERYR…GLQD). Fe cation is bound by residues His-58, Glu-59, His-91, and Glu-92. 4 residues coordinate Fe cation: His-252, Glu-253, His-285, and Glu-286.

The protein belongs to the deoxyhypusine hydroxylase family. The cofactor is Fe(2+).

Its subcellular location is the cytoplasm. It is found in the nucleus. It carries out the reaction [eIF5A protein]-deoxyhypusine + AH2 + O2 = [eIF5A protein]-hypusine + A + H2O. The protein operates within protein modification; eIF5A hypusination. Functionally, catalyzes the hydroxylation of the N(6)-(4-aminobutyl)-L-lysine intermediate to form hypusine, an essential post-translational modification only found in mature eIF-5A factor. The sequence is that of Deoxyhypusine hydroxylase from Mycosarcoma maydis (Corn smut fungus).